Consider the following 537-residue polypeptide: Chaperonin GroEL 3 (537 aa).

Residues 30 to 33 (TLGP), 87 to 91 (DGTTT), Gly414, 480 to 482 (DAL), and Asp496 each bind ATP.

The protein belongs to the chaperonin (HSP60) family. Forms a cylinder of 14 subunits composed of two heptameric rings stacked back-to-back. Interacts with the co-chaperonin GroES.

The protein localises to the cytoplasm. The catalysed reaction is ATP + H2O + a folded polypeptide = ADP + phosphate + an unfolded polypeptide.. Together with its co-chaperonin GroES, plays an essential role in assisting protein folding. The GroEL-GroES system forms a nano-cage that allows encapsulation of the non-native substrate proteins and provides a physical environment optimized to promote and accelerate protein folding. The protein is Chaperonin GroEL 3 of Acaryochloris marina (strain MBIC 11017).